Here is a 616-residue protein sequence, read N- to C-terminus: D-glucuronyl C5-epimerase (616 aa).

Residues 1 to 12 are Cytoplasmic-facing; that stretch reads MKCLRWRSNRHR. Residues 13–29 traverse the membrane as a helical; Signal-anchor for type II membrane protein segment; it reads IYLLVACGALFLLNRHL. The Extracellular portion of the chain corresponds to 30–616; that stretch reads TQEESRIDEE…YAYGKRAKHN (587 aa). Residues Tyr-136, 141–143, and Gln-169 contribute to the substrate site; that span reads RDR. 4 N-linked (GlcNAc...) asparagine glycosylation sites follow: Asn-188, Asn-232, Asn-267, and Asn-471. Residues Tyr-504, Arg-562, and 574–580 contribute to the substrate site; that span reads RWDYHAV.

Belongs to the D-glucuronyl C5-epimerase family. In terms of assembly, homodimer. As to expression, expression in comma stage embryos is strong in the hypodermis and intestine and weaker in the head region. In late embryos, larval, and adult stages, expressed primarily in hypodermis and intestine.

The protein resides in the cell membrane. It localises to the secreted. Its subcellular location is the extracellular space. It is found in the extracellular matrix. The protein localises to the basement membrane. It carries out the reaction [heparosan-N-sulfate](n) = [heparan-N-sulfate](n). It participates in glycan metabolism; heparan sulfate biosynthesis. The protein operates within glycan metabolism; heparin biosynthesis. Converts D-glucuronic acid residues adjacent to N-sulfate sugar residues to L-iduronic acids. Plays a role in the early migration of AQR and PQR neurons, which descend from the Q neuroblasts. In Caenorhabditis elegans, this protein is D-glucuronyl C5-epimerase (hse-5).